The primary structure comprises 515 residues: Protein disulfide-isomerase (515 aa).

The first 25 residues, 1–25, serve as a signal peptide directing secretion; sequence MAISKVWISLLLALAVVLSAPAARA. The Thioredoxin 1 domain maps to 26 to 150; sequence EEAAAAEEAA…IVEYLKKQVG (125 aa). Residues cysteine 68 and cysteine 71 each act as nucleophile in the active site. An intrachain disulfide couples cysteine 68 to cysteine 71. Asparagine 283 is a glycosylation site (N-linked (GlcNAc...) asparagine). The 144-residue stretch at 346–489 folds into the Thioredoxin 2 domain; that stretch reads LKEQVEAGQI…IVDYIKKNKE (144 aa). Active-site nucleophile residues include cysteine 412 and cysteine 415. An intrachain disulfide couples cysteine 412 to cysteine 415. The span at 494-509 shows a compositional bias: low complexity; it reads AAAAATEKAAEPAATE. Residues 494-515 are disordered; sequence AAAAATEKAAEPAATEPLKDEL. Residues 512–515 carry the Prevents secretion from ER motif; sequence KDEL.

This sequence belongs to the protein disulfide isomerase family.

The protein localises to the endoplasmic reticulum lumen. It catalyses the reaction Catalyzes the rearrangement of -S-S- bonds in proteins.. In terms of biological role, participates in the folding of proteins containing disulfide bonds, may be involved in glycosylation, prolyl hydroxylation and triglyceride transfer. In Triticum aestivum (Wheat), this protein is Protein disulfide-isomerase (PDI).